The sequence spans 157 residues: Nascent polypeptide-associated complex subunit alpha (157 aa).

An NAC-A/B domain is found at 6–71; sequence TTDESHIHKT…LGSPVNLHQL (66 aa). Residues 81–107 show a composition bias toward basic and acidic residues; that stretch reads SSKDQEGPGLYDEIHSDPQEDGVKEAE. The tract at residues 81-116 is disordered; it reads SSKDQEGPGLYDEIHSDPQEDGVKEAEEITVDPSDE. A UBA domain is found at 118–157; sequence LSEEDIKLISSQVKASRNDIIKALVESEYDVVDAMMKLTK.

Belongs to the NAC-alpha family.

The protein localises to the cytoplasm. The protein resides in the nucleus. Its function is as follows. May be involved in mitochondrial protein import by enhancing productive ribosome interactions with the outer mitochondrial membrane and blocks the inappropriate interaction of ribosomes translating non-secretory nascent polypeptides with translocation sites in the membrane of the endoplasmic reticulum. EGD2 may also be involved in transcription regulation. This Encephalitozoon cuniculi (strain GB-M1) (Microsporidian parasite) protein is Nascent polypeptide-associated complex subunit alpha (EGD2).